The chain runs to 581 residues: MKSHIQSLLEQTIESFKQQGILPADFEARIQVDRTKDKSHGDLATNLAMMLTKAAGKNPRELAQLIIDNLPASAYVAKVEIAGPGFINFFIDDSALANQLQAAISDEHLGIKLPTPQTIVVDYSSPNLAKEMHVGHLRSTIIGDSVVRTLEFLGHKVIRQNHVGDWGTQFGMLLAYMEELRAQNGEQAQLELSDLETFYRAAKLRFDESAEFATRARQLVVELQSGDEYCNKLWREFNDISLSHCHEVYERLGVSLTRADVHGESAYNADLEQVVKDLDAQGLLTQSNGAKVVFQEEFRNKEGEALPVIIQKADGGYLYATTDLAAMRYRSSVLKADRVLYFVDLRQALHFQQVFSLAKLAKFVRNDMSLEHLGFGTMNGEDGRPFKTRTGGVVKLVDLLDEANTRALELVRSKNPDMDEATLAEIARVVGISAVKYADLSKNRTSDYIFSFEQMLSFEGNTAPYLLYAYTRVAGIFKRATDIDLSQAKIVLEHEKEKDLGNKLAQFGEILSRVVDKGQPHVLCGYLYELAGAFSSFYEACPVLAADNDEQKHSRLLLSQLTANTLQKGLNLLGIETLERM.

Positions 126 to 136 (PNLAKEMHVGH) match the 'HIGH' region motif.

Belongs to the class-I aminoacyl-tRNA synthetase family. Monomer.

The protein resides in the cytoplasm. It carries out the reaction tRNA(Arg) + L-arginine + ATP = L-arginyl-tRNA(Arg) + AMP + diphosphate. In Shewanella sp. (strain MR-7), this protein is Arginine--tRNA ligase.